A 266-amino-acid chain; its full sequence is Putative pyruvate, phosphate dikinase regulatory protein (266 aa).

147–154 (GLSRTSKT) contributes to the ADP binding site.

The protein belongs to the pyruvate, phosphate/water dikinase regulatory protein family. PDRP subfamily.

The catalysed reaction is N(tele)-phospho-L-histidyl/L-threonyl-[pyruvate, phosphate dikinase] + ADP = N(tele)-phospho-L-histidyl/O-phospho-L-threonyl-[pyruvate, phosphate dikinase] + AMP + H(+). It carries out the reaction N(tele)-phospho-L-histidyl/O-phospho-L-threonyl-[pyruvate, phosphate dikinase] + phosphate + H(+) = N(tele)-phospho-L-histidyl/L-threonyl-[pyruvate, phosphate dikinase] + diphosphate. In terms of biological role, bifunctional serine/threonine kinase and phosphorylase involved in the regulation of the pyruvate, phosphate dikinase (PPDK) by catalyzing its phosphorylation/dephosphorylation. This chain is Putative pyruvate, phosphate dikinase regulatory protein, found in Clostridium perfringens (strain SM101 / Type A).